The primary structure comprises 248 residues: Aspartate/glutamate leucyltransferase (248 aa).

This sequence belongs to the R-transferase family. Bpt subfamily.

The protein localises to the cytoplasm. The enzyme catalyses N-terminal L-glutamyl-[protein] + L-leucyl-tRNA(Leu) = N-terminal L-leucyl-L-glutamyl-[protein] + tRNA(Leu) + H(+). It catalyses the reaction N-terminal L-aspartyl-[protein] + L-leucyl-tRNA(Leu) = N-terminal L-leucyl-L-aspartyl-[protein] + tRNA(Leu) + H(+). Functions in the N-end rule pathway of protein degradation where it conjugates Leu from its aminoacyl-tRNA to the N-termini of proteins containing an N-terminal aspartate or glutamate. The protein is Aspartate/glutamate leucyltransferase of Polynucleobacter asymbioticus (strain DSM 18221 / CIP 109841 / QLW-P1DMWA-1) (Polynucleobacter necessarius subsp. asymbioticus).